A 265-amino-acid polypeptide reads, in one-letter code: Hemin import ATP-binding protein HmuV (265 aa).

The region spanning 13 to 249 (LKASNLHLQL…TAVENVYGWP (237 aa)) is the ABC transporter domain. 45–52 (GPNGAGKS) contacts ATP.

The protein belongs to the ABC transporter superfamily. Heme (hemin) importer (TC 3.A.1.14.5) family. In terms of assembly, the complex is composed of two ATP-binding proteins (HmuV), two transmembrane proteins (HmuU) and a solute-binding protein (HmuT).

The protein localises to the cell inner membrane. In terms of biological role, part of the ABC transporter complex HmuTUV involved in hemin import. Responsible for energy coupling to the transport system. The polypeptide is Hemin import ATP-binding protein HmuV (Photobacterium damsela subsp. piscicida (Pasteurella piscicida)).